A 185-amino-acid chain; its full sequence is Acireductone dioxygenase (185 aa).

Residues histidine 97, histidine 99, glutamate 103, and histidine 141 each contribute to the Fe(2+) site. 4 residues coordinate Ni(2+): histidine 97, histidine 99, glutamate 103, and histidine 141.

This sequence belongs to the acireductone dioxygenase (ARD) family. Monomer. It depends on Fe(2+) as a cofactor. The cofactor is Ni(2+).

The catalysed reaction is 1,2-dihydroxy-5-(methylsulfanyl)pent-1-en-3-one + O2 = 3-(methylsulfanyl)propanoate + CO + formate + 2 H(+). It carries out the reaction 1,2-dihydroxy-5-(methylsulfanyl)pent-1-en-3-one + O2 = 4-methylsulfanyl-2-oxobutanoate + formate + 2 H(+). Its pathway is amino-acid biosynthesis; L-methionine biosynthesis via salvage pathway; L-methionine from S-methyl-5-thio-alpha-D-ribose 1-phosphate: step 5/6. Its function is as follows. Catalyzes 2 different reactions between oxygen and the acireductone 1,2-dihydroxy-3-keto-5-methylthiopentene (DHK-MTPene) depending upon the metal bound in the active site. Fe-containing acireductone dioxygenase (Fe-ARD) produces formate and 2-keto-4-methylthiobutyrate (KMTB), the alpha-ketoacid precursor of methionine in the methionine recycle pathway. Ni-containing acireductone dioxygenase (Ni-ARD) produces methylthiopropionate, carbon monoxide and formate, and does not lie on the methionine recycle pathway. The chain is Acireductone dioxygenase from Stenotrophomonas maltophilia (strain R551-3).